Consider the following 378-residue polypeptide: Pulmonary surfactant-associated protein D (378 aa).

Positions 1–20 are cleaved as a signal peptide; the sequence is MLLLPLSVLILLTQPPRSLG. 2 positions are modified to S-nitrosocysteine: Cys35 and Cys40. A disordered region spans residues 43-221; that stretch reads MENGLPGRDG…ERGAKGESGL (179 aa). The region spanning 46–222 is the Collagen-like domain; the sequence is GLPGRDGRDG…RGAKGESGLP (177 aa). Basic and acidic residues predominate over residues 50–65; it reads RDGRDGREGPRGEKGD. Pro78 carries the 4-hydroxyproline modification. Position 87 is a 5-hydroxylysine (Lys87). Asn90 is a glycosylation site (N-linked (GlcNAc...) asparagine). Pro96 bears the 4-hydroxyproline mark. A 5-hydroxylysine modification is found at Lys99. A compositionally biased stretch (pro residues) spans 105 to 114; the sequence is CGPPGPPGIP. Low complexity predominate over residues 137-146; it reads PKGETGPKGE. 2 positions are modified to 4-hydroxyproline: Pro171 and Pro177. Over residues 173–197 the composition is skewed to low complexity; it reads ERGAPGSAGAAGPAGATGPQGPSGA. Basic and acidic residues predominate over residues 204–216; that stretch reads KGDRGPPGERGAK. The stretch at 223-254 forms a coiled coil; that stretch reads GITALRQQVETLQGQVQRLQKAFSQYKKVELF. The 119-residue stretch at 260-378 folds into the C-type lectin domain; the sequence is VGEKIFKTGG…GELRLVICEF (119 aa). 2 cysteine pairs are disulfide-bonded: Cys281–Cys376 and Cys354–Cys368. N-linked (GlcNAc...) asparagine glycosylation occurs at Asn323.

It belongs to the SFTPD family. As to quaternary structure, oligomeric complex of 4 set of homotrimers. In terms of processing, hydroxylation on proline residues within the sequence motif, GXPG, is most likely to be 4-hydroxy as this fits the requirement for 4-hydroxylation in vertebrates. Post-translationally, S-nitrosylation at Cys-35 and Cys-40 alters the quaternary structure which results in a pro-inflammatory chemoattractive signaling activity with macrophages.

The protein resides in the secreted. The protein localises to the extracellular space. It localises to the extracellular matrix. Its subcellular location is the surface film. Functionally, contributes to the lung's defense against inhaled microorganisms, organic antigens and toxins. Interacts with compounds such as bacterial lipopolysaccharides, oligosaccharides and fatty acids and modulates leukocyte action in immune response. May participate in the extracellular reorganization or turnover of pulmonary surfactant. Binds strongly maltose residues and to a lesser extent other alpha-glucosyl moieties. This Sus scrofa (Pig) protein is Pulmonary surfactant-associated protein D (SFTPD).